The sequence spans 331 residues: MEPMNLGSPVNSPGSNQTQYLPPFLLGDPQGITPHKNTLSPKTGRSNISFATSPGGSSPHELNRSALSTRTLFAAQGGAHTAVGANSSTTAHGQTHSHHQTGPPTQGLFDSLREQSVTPKKKNHLGMLQLQSPNQSYQSSYHTNDSFAPGAPNAINASMRALCSPLGATASPAGGLGTSVTTGGNSRLSDFWVTIFGFPPGAGSMVLQHFTVCGTIVDVVHAPQNGNWMYVRYSSRIESDKALNYNEKIIAGNVMVGVSRCTDRSVIDKENIGSVPNAEIGDPPTSPSAIRPFSQQSYKLARKDNIISPQKDVPQKSSGLMDKAMDLIFGW.

2 disordered regions span residues 1 to 63 (MEPM…HELN) and 79 to 110 (AHTA…GLFD). Polar residues-rich tracts occupy residues 8–20 (SPVN…QTQY), 35–56 (HKNT…SPGG), and 84–104 (GANS…TGPP). An RRM Nup35-type domain is found at 187–268 (RLSDFWVTIF…SRCTDRSVID (82 aa)).

The protein belongs to the Nup35 family. In terms of assembly, interacts with Nup154.

Its subcellular location is the nucleus. The protein localises to the nuclear pore complex. Its function is as follows. Functions as a component of the nuclear pore complex (NPC). May have a role in the organization of the inner nuclear membrane proteins at the nuclear envelope together with Nup154. The chain is Nucleoporin Nup35 from Drosophila melanogaster (Fruit fly).